A 163-amino-acid polypeptide reads, in one-letter code: Large ribosomal subunit protein uL10 (163 aa).

The protein belongs to the universal ribosomal protein uL10 family. As to quaternary structure, part of the ribosomal stalk of the 50S ribosomal subunit. The N-terminus interacts with L11 and the large rRNA to form the base of the stalk. The C-terminus forms an elongated spine to which L12 dimers bind in a sequential fashion forming a multimeric L10(L12)X complex.

In terms of biological role, forms part of the ribosomal stalk, playing a central role in the interaction of the ribosome with GTP-bound translation factors. In Haemophilus influenzae (strain PittEE), this protein is Large ribosomal subunit protein uL10.